The sequence spans 88 residues: Small ribosomal subunit protein bS20 (88 aa).

The segment covering 1–22 (MANIKSSKKRSIQSEKKRKYNS) has biased composition (basic residues). The segment at 1-26 (MANIKSSKKRSIQSEKKRKYNSSKKS) is disordered.

It belongs to the bacterial ribosomal protein bS20 family.

Functionally, binds directly to 16S ribosomal RNA. The polypeptide is Small ribosomal subunit protein bS20 (Wigglesworthia glossinidia brevipalpis).